The primary structure comprises 81 residues: Elongation factor 1-beta (81 aa).

This sequence belongs to the EF-1-beta/EF-1-delta family.

Functionally, promotes the exchange of GDP for GTP in EF-1-alpha/GDP, thus allowing the regeneration of EF-1-alpha/GTP that could then be used to form the ternary complex EF-1-alpha/GTP/AAtRNA. This is Elongation factor 1-beta from Nanoarchaeum equitans (strain Kin4-M).